Reading from the N-terminus, the 223-residue chain is UPF0441 protein KPN78578_33850 (223 aa).

Residues 165 to 223 (SYGAAQPGRTMNVPKTAMAPKPATTTTVTRGGFGESVAKQSTMQRSAAGSTSSSRSMGG) are disordered. Composition is skewed to low complexity over residues 177-193 (VPKTAMAPKPATTTTVT) and 209-223 (RSAAGSTSSSRSMGG).

It belongs to the UPF0441 family.

The sequence is that of UPF0441 protein KPN78578_33850 from Klebsiella pneumoniae subsp. pneumoniae (strain ATCC 700721 / MGH 78578).